A 278-amino-acid polypeptide reads, in one-letter code: Protoheme IX farnesyltransferase (278 aa).

The next 9 membrane-spanning stretches (helical) occupy residues 12-32 (VIWL…QTVD), 33-53 (WSKL…SAAF), 83-103 (ALVY…YLLG), 105-125 (LPGL…TIWL), 130-150 (WLNI…GYAL), 157-177 (LPAV…IWAL), 204-224 (VIIS…YLAF), 228-248 (LLGL…SILA), and 257-277 (MWKM…ALVF).

This sequence belongs to the UbiA prenyltransferase family. Protoheme IX farnesyltransferase subfamily.

Its subcellular location is the cell membrane. The catalysed reaction is heme b + (2E,6E)-farnesyl diphosphate + H2O = Fe(II)-heme o + diphosphate. The protein operates within porphyrin-containing compound metabolism; heme O biosynthesis; heme O from protoheme: step 1/1. In terms of biological role, converts heme B (protoheme IX) to heme O by substitution of the vinyl group on carbon 2 of heme B porphyrin ring with a hydroxyethyl farnesyl side group. The sequence is that of Protoheme IX farnesyltransferase from Pyrobaculum islandicum (strain DSM 4184 / JCM 9189 / GEO3).